The chain runs to 407 residues: ETS domain-containing protein Elk-3 (407 aa).

Residues 5-85 (ITLWQFLLQL…IGQKFVYKFV (81 aa)) constitute a DNA-binding region (ETS). Residue lysine 92 forms a Glycyl lysine isopeptide (Lys-Gly) (interchain with G-Cter in SUMO2) linkage. Serine 115 is subject to Phosphoserine. A Glycyl lysine isopeptide (Lys-Gly) (interchain with G-Cter in SUMO2) cross-link involves residue lysine 165. Disordered stretches follow at residues 234–253 (SSAS…SPLP) and 271–298 (LEPL…KGLE). The CTBP-binding motif signature appears at 273–277 (PLNLS). Phosphoserine is present on serine 396.

Belongs to the ETS family. In terms of assembly, interacts with CTBP1.

The protein localises to the nucleus. May be a negative regulator of transcription, but can activate transcription when coexpressed with Ras, Src or Mos. Forms a ternary complex with the serum response factor and the ETS and SRF motifs of the Fos serum response element. This is ETS domain-containing protein Elk-3 (ELK3) from Homo sapiens (Human).